A 334-amino-acid polypeptide reads, in one-letter code: Beta-hexosaminidase (334 aa).

Residues Asp-62, Arg-70, Arg-131, and 161–162 (KH) contribute to the substrate site. His-174 acts as the Proton donor/acceptor in catalysis. Asp-246 functions as the Nucleophile in the catalytic mechanism.

The protein belongs to the glycosyl hydrolase 3 family. NagZ subfamily.

Its subcellular location is the cytoplasm. It carries out the reaction Hydrolysis of terminal non-reducing N-acetyl-D-hexosamine residues in N-acetyl-beta-D-hexosaminides.. The protein operates within cell wall biogenesis; peptidoglycan recycling. Functionally, plays a role in peptidoglycan recycling by cleaving the terminal beta-1,4-linked N-acetylglucosamine (GlcNAc) from peptide-linked peptidoglycan fragments, giving rise to free GlcNAc, anhydro-N-acetylmuramic acid and anhydro-N-acetylmuramic acid-linked peptides. In Tolumonas auensis (strain DSM 9187 / NBRC 110442 / TA 4), this protein is Beta-hexosaminidase.